A 457-amino-acid chain; its full sequence is UDP-N-acetylmuramate--L-alanine ligase (457 aa).

ATP is bound at residue 109–115 (GTDGKTT).

The protein belongs to the MurCDEF family.

It localises to the cytoplasm. The catalysed reaction is UDP-N-acetyl-alpha-D-muramate + L-alanine + ATP = UDP-N-acetyl-alpha-D-muramoyl-L-alanine + ADP + phosphate + H(+). It functions in the pathway cell wall biogenesis; peptidoglycan biosynthesis. In terms of biological role, cell wall formation. This Thermotoga sp. (strain RQ2) protein is UDP-N-acetylmuramate--L-alanine ligase.